The following is a 1272-amino-acid chain: MGRMKVIPEFSNYKIRTPIPIFKNELEIEKYIKGAISYIYSENTAKKLELKKRNDEIKEILNNKNDHEFVEKKIRAIVIQLGDTNLNDRCYLNYLNLYKQPIEFTHGAIMCEKNKYWVAYYASQSLNLDCLNFIIKHKDQFKGLDKDKRIKPIDPKKKISRDLLIGQPITVQCIKEDDLFKFLTVYFNQNGIEFSDSWFSSIVKLIFKGKVYSSDESEKLSTTTTTTTTPNEKYDKKILGEHTVFINKNRDGHLKFSTIPSLLLKISTLMNTGVINEYKQKNYFLETLYNSFPANKHFFNFNEETIQYITNLLLPHLHPLEFKRFNTIPWIIKSKEFIDFIIQHKDFYHLVPSIHKFTKKHENTNLFSASTINDGEEEDDDDDDNDVDGNDDDNNKEKVDDTSNKKDSIVKFKDDITIYLNVRQRFLQFSNFELANYFHTKLLECQKESENQINSNIQSINKEIESLSTSSTNTASSTRSKASSNSNQLKKKEDLEQQIIELQSLLKNKYFSNKEIYYLSFLRALKDCDISTIESIDKVVSIDSDQNNNKFQILFQKSFLENQPLKNGISPEFYDFKKVGPSSHPDVYAEGEYDEHDEYDDYQGKLDNHIDIKDSKFTKDENSRDQLFNYLKSSGFKSFTPSIFCYLLELLLLINTEKSNQQFQEIFKPISTTTTTSTTTTTTTTNLDNINEKIFKLSSDLLIHLVHIVDFKKFSIILDSVNLNRKLILEMIDNCKNKLSFQKRIYEFHDVRSKDYQYDINGHFSTNIKFSDAKDILKKLIDENLFPTSKDWIFIYHSLYISILQSTGVTLNNLLEVNKIYEEHEINYPSVLPNHSNYILDFNNNNNNNNNNNYYGLLNYQPYNNSGNINNESLKNVVSNFVLFYWFHLLDRKLSKLFVRSFSNSNFNEFSSSRLPCLKNSSICRIRSKRHSNTASQIFKSIYELQNFSLLEKYSTFKSYFPEERSYYYNNPSDPFYHPDGSKDFRVLIEEGEFQLAFNHLQLVATKTVSEFPPLTTSRLFQFITLEDVIELINLTTIKNFDESKDESEQQPLLKMWYGKDVKKCKDWILSCAIAKSRLDIVDLLLVKDIEYSTLPSTIEFLTGYKIIKSLFSPECDNQTLEYFLTFSNGIVLPSIKQYLIKDNIATQTKNDVFRVIRHGIGKFELLRTFIPSLGFSSCLIEKMVENRRFETLQYYMEIGLITNEDLTNQQKDQLKYENDLKHLDWVINLNHKKRVNRNQPTFTPNTNSTTATTATPLLQTRSGRTIIPIKK.

A Nuclear localization signal motif is present at residues 146-161 (KDKRIKPIDPKKKISR). 2 disordered regions span residues 369 to 403 (ASTI…DDTS) and 468 to 490 (STSS…NQLK). Over residues 374 to 392 (DGEEEDDDDDDNDVDGNDD) the composition is skewed to acidic residues. A compositionally biased stretch (basic and acidic residues) spans 393–403 (DNNKEKVDDTS). Residues 468-487 (STSSTNTASSTRSKASSNSN) are compositionally biased toward low complexity.

The protein resides in the nucleus. Functions autonomously, very early in the prespore pathway, to control prespore cell differentiation, maybe at the level of transcription. Also required for proper aggregation. The sequence is that of Presporeless protein A (pslA) from Dictyostelium discoideum (Social amoeba).